Reading from the N-terminus, the 135-residue chain is Large ribosomal subunit protein uL16 (135 aa).

The protein belongs to the universal ribosomal protein uL16 family. As to quaternary structure, part of the 50S ribosomal subunit.

Binds 23S rRNA and is also seen to make contacts with the A and possibly P site tRNAs. The protein is Large ribosomal subunit protein uL16 of Desulfatibacillum aliphaticivorans.